The sequence spans 378 residues: Putative glutamate--cysteine ligase 2 (378 aa).

It belongs to the glutamate--cysteine ligase type 2 family. YbdK subfamily.

It carries out the reaction L-cysteine + L-glutamate + ATP = gamma-L-glutamyl-L-cysteine + ADP + phosphate + H(+). ATP-dependent carboxylate-amine ligase which exhibits weak glutamate--cysteine ligase activity. The polypeptide is Putative glutamate--cysteine ligase 2 (Bdellovibrio bacteriovorus (strain ATCC 15356 / DSM 50701 / NCIMB 9529 / HD100)).